Consider the following 251-residue polypeptide: MNDTGRRILLNCDMGESFGAWRMGDDVHSMPLVDQANLACGFHAGDPLTMRRAVELAVRHGVSIGAHPAYPDLSGFGRRSLACSAEEVHAMVLYQIGALDAFCRSLGTQVAYVKPHGALYNDLVGDDELLRAVLDACAAYRKGLPLMVLALADNGRELELADEADVPLLFEAFADRAYLPDGRLAPRRLGGAVHHDPQRIIEQALAIARGEAFPDYDGNPLRLTADSLCVHGDNPQSLAVLRRLRAALDSL.

This sequence belongs to the LamB/PxpA family. As to quaternary structure, forms a complex composed of PxpA, PxpB and PxpC.

The enzyme catalyses 5-oxo-L-proline + ATP + 2 H2O = L-glutamate + ADP + phosphate + H(+). In terms of biological role, catalyzes the cleavage of 5-oxoproline to form L-glutamate coupled to the hydrolysis of ATP to ADP and inorganic phosphate. This Pseudomonas aeruginosa (strain ATCC 15692 / DSM 22644 / CIP 104116 / JCM 14847 / LMG 12228 / 1C / PRS 101 / PAO1) protein is 5-oxoprolinase subunit A 3.